We begin with the raw amino-acid sequence, 100 residues long: MHFTQREQDKLMIVVAAEVARRRKARGLKLNHPEALALISDELLEGARDGKTVAELMSYGKTILNEEDVMDGVANMITELEIEATFPDGTKLITVHHPIV.

Belongs to the urease gamma subunit family. In terms of assembly, heterotrimer of UreA (gamma), UreB (beta) and UreC (alpha) subunits. Three heterotrimers associate to form the active enzyme.

It is found in the cytoplasm. It carries out the reaction urea + 2 H2O + H(+) = hydrogencarbonate + 2 NH4(+). It functions in the pathway nitrogen metabolism; urea degradation; CO(2) and NH(3) from urea (urease route): step 1/1. This is Urease subunit gamma from Staphylococcus epidermidis (strain ATCC 35984 / DSM 28319 / BCRC 17069 / CCUG 31568 / BM 3577 / RP62A).